The primary structure comprises 155 residues: SsrA-binding protein (155 aa).

The protein belongs to the SmpB family.

It localises to the cytoplasm. Its function is as follows. Required for rescue of stalled ribosomes mediated by trans-translation. Binds to transfer-messenger RNA (tmRNA), required for stable association of tmRNA with ribosomes. tmRNA and SmpB together mimic tRNA shape, replacing the anticodon stem-loop with SmpB. tmRNA is encoded by the ssrA gene; the 2 termini fold to resemble tRNA(Ala) and it encodes a 'tag peptide', a short internal open reading frame. During trans-translation Ala-aminoacylated tmRNA acts like a tRNA, entering the A-site of stalled ribosomes, displacing the stalled mRNA. The ribosome then switches to translate the ORF on the tmRNA; the nascent peptide is terminated with the 'tag peptide' encoded by the tmRNA and targeted for degradation. The ribosome is freed to recommence translation, which seems to be the essential function of trans-translation. The sequence is that of SsrA-binding protein from Geobacillus sp. (strain WCH70).